Here is a 2161-residue protein sequence, read N- to C-terminus: MTHSPATSEDEERHSASECPEGGSESDSSPDGPGRGPRGTRGQGSGAPGSLASVRGLQGRSMSVPDDAHFSMMVFRIGIPDLHQTKCLRFNPDATIWTAKQQVLCALSESLQDVLNYGLFQPATSGRDANFLEEERLLREYPQSFEKGVPYLEFRYKTRVYKQTNLDEKQLAKLHTKTGLKKFLEYVQLGTSDKVARLLDKGLDPNYHDSDSGETPLTLAAQTEGSVEVIRTLCLGGAHIDFRARDGMTALHKAACARHCLALTALLDLGGSPNYKDRRGLTPLFHTAMVGGDPRCCELLLFNRAQLGIADENGWQEIHQACQRGHSQHLEHLLFYGAEPGAQNASGNTALHICALYNKETCARILLYRGADKDVKNNNGQTPFQVAVIAGNFELGELIRNHREQDVVPFQESPKYAARRRGPPGTGLTVPPALLRANSDTSMALPDWMVFSAPGAASSGAPGPTSGSQGQSQPSAPTTKLSSGTLRSASSPRGARARSPSRGRHPEDAKRQPRGRPSSSGTPREGPAGGTGGSGGPGGSLGSRGRRRKLYSAVPGRSFMAVKSYQAQAEGEISLSKGEKIKVLSIGEGGFWEGQVKGRVGWFPSDCLEEVANRSQESKQESRSDKAKRLFRHYTVGSYDSFDAPSLMDGIGPGSDYIIKEKTVLLQKKDSEGFGFVLRGAKAQTPIEEFTPTPAFPALQYLESVDEGGVAWRAGLRMGDFLIEVNGQNVVKVGHRQVVNMIRQGGNTLMVKVVMVTRHPDMDEAVHKKAPQQAKRLPPPTISLRSKSMTSELEEMEYEQQPAPVPSMEKKRTVYQMALNKLDEILAAAQQTISASESPGPGGLASLGKHRPKGFFATESSFDPHHRAQPSYERPSFLPPGPGLMLRQKSIGAAEDDRPYLAPPAMKFSRSLSVPGSEDIPPPPTTSPPEPPYSTPPVPSSSGRLTPSPRGGPFNPGSGGPLPASSPASFDGPSPPDTRVGSREKSLYHSGPLPPAHHHPPHHHHHHAPPPQPHHHHAHPPHPPEMETGGSPDDPPPRLALGPQPSLRGWRGGGPSPTPGAPSPSHHGSAGGGGGSSQGPALRYFQLPPRAASAAMYVPARSGRGRKGPLVKQTKVEGEPQKGGGLPPAPSPTSPASPQPPPAVAAPSEKNSIPIPTIIIKAPSTSSSGRSSQGSSTEAEPPTQPEPTGGGGGGGSSPSPAPAMSPVPPSPSPVPTPASPSGPATLDFTSQFGAALVGAARREGGWQNEARRRSTLFLSTDAGDEDGGDGGLGTGAAPGPRLRHSKSIDEGMFSAEPYLRLESAGSGAGYGGYGAGSRAYGGGGGSSAFTSFLPPRPLVHPLTGKALDPASPLGLALAARERALKESSEGGGAPQPPPRPPSPRYEAPPPTPHHHSPHAHHEPVLRLWGASPPDPARRELGYRAGLGSQEKSLPASPPAARRSLLHRLPPTAPGVGPLLLQLGTEPPAPHPGVSKPWRSAAPEEPERLPLHVRFLENCQPRAPVTSGRGPPSEDGPGVPPPSPRRSVPPSPTSPRASEENGLPLLVLPPPAPSVDVEDGEFLFVEPLPPPLEFSNSFEKPESPLTPGPPHPLPDTPAPATPLPPVPPPAVAAAPPTLDSTASSLTSYDSEVATLTQGASAAPGDPHPPGPPAPAAPAPAAPQPGPDPPPGTDSGIEEVDSRSSSDHPLETISSASTLSSLSAEGGGSAGGGGGAGAGVASGPELLDTYVAYLDGQAFGGSSTPGPPYPPQLMTPSKLRGRALGASGGLRPGPSGGLRDPVTPTSPTVSVTGAGTDGLLALRACSGPPTAGVAGGPVAVEPEVPPVPLPTASSLPRKLLPWEEGPGPPPPPLPGPLAQPQASALATVKASIISELSSKLQQFGGSSAAGGALPWARGGSGGGGDSHHGGASYVPERTSSLQRQRLSDDSQSSLLSKPVSSLFQNWPKPPLPPLPTGTGVSPTAAAAPGATSPSASSSSTSTRHLQGVEFEMRPPLLRRAPSPSLLPASEHKVSPAPRPSSLPILPSGPLYPGLFDIRGSPTGGAGGSADPFAPVFVPPHPGISGGLGGALSGASRSLSPTRLLSLPPDKPFGAKPLGFWTKFDVADWLEWLGLAEHRAQFLDHEIDGSHLPALTKEDYVDLGVTRVGHRMNIDRALKFFLER.

A disordered region spans residues 1-53; it reads MTHSPATSEDEERHSASECPEGGSESDSSPDGPGRGPRGTRGQGSGAPGSLAS. Residues 17–32 show a composition bias toward low complexity; it reads SECPEGGSESDSSPDG. Residues 33–47 show a composition bias toward gly residues; the sequence is PGRGPRGTRGQGSGA. Position 186 is a phosphotyrosine (Tyr186). 6 ANK repeats span residues 212–245, 246–278, 279–312, 313–345, 346–378, and 379–395; these read SGET…FRAR, DGMT…YKDR, RGLT…IADE, NGWQ…AQNA, SGNT…VKNN, and NGQT…NFEL. Disordered regions lie at residues 412-433 and 455-546; these read ESPK…VPPA and GAAS…SRGR. Residues 455 to 479 show a composition bias toward low complexity; sequence GAASSGAPGPTSGSQGQSQPSAPTT. Positions 527–542 are enriched in gly residues; it reads PAGGTGGSGGPGGSLG. A Phosphoserine modification is found at Ser540. Arg544 bears the Omega-N-methylarginine mark. Residues 554 to 613 enclose the SH3 domain; the sequence is VPGRSFMAVKSYQAQAEGEISLSKGEKIKVLSIGEGGFWEGQVKGRVGWFPSDCLEEVAN. The PDZ domain occupies 663–757; it reads TVLLQKKDSE…TLMVKVVMVT (95 aa). Phosphoserine occurs at positions 671 and 791. The tract at residues 832–886 is disordered; it reads TISASESPGPGGLASLGKHRPKGFFATESSFDPHHRAQPSYERPSFLPPGPGLML. Residue Ser890 is modified to Phosphoserine. Disordered stretches follow at residues 909–1229, 1241–1289, 1353–1720, 1734–1785, 1827–1860, 1892–1983, and 1996–2023; these read SRSL…LDFT, RREG…KSID, LGLA…GVAS, GQAF…PTSP, LPTA…QPQA, PWAR…TRHL, and RRAP…LPIL. Residues 920 to 939 are compositionally biased toward pro residues; it reads IPPPPTTSPPEPPYSTPPVP. Residue Arg950 is modified to Omega-N-methylarginine. The span at 996-1020 shows a compositional bias: basic residues; it reads AHHHPPHHHHHHAPPPQPHHHHAHP. Omega-N-methylarginine is present on residues Arg1051, Arg1090, and Arg1101. Residues 1127–1144 show a composition bias toward pro residues; the sequence is PPAPSPTSPASPQPPPAV. Low complexity predominate over residues 1164–1181; sequence STSSSGRSSQGSSTEAEP. Residues 1199–1220 show a composition bias toward pro residues; sequence SPAPAMSPVPPSPSPVPTPASP. Residues 1241-1252 are compositionally biased toward basic and acidic residues; that stretch reads RREGGWQNEARR. An Asymmetric dimethylarginine modification is found at Arg1253. Residue Ser1287 is modified to Phosphoserine. Basic and acidic residues predominate over residues 1359–1368; that stretch reads ARERALKESS. The span at 1374–1391 shows a compositional bias: pro residues; the sequence is PQPPPRPPSPRYEAPPPT. Position 1423 is an omega-N-methylarginine (Arg1423). Ser1436 is modified (phosphoserine). Composition is skewed to pro residues over residues 1517–1532 and 1583–1609; these read GVPP…PSPT and PLTP…PPPA. Over residues 1618 to 1636 the composition is skewed to polar residues; that stretch reads DSTASSLTSYDSEVATLTQ. The segment covering 1644 to 1670 has biased composition (pro residues); it reads DPHPPGPPAPAAPAPAAPQPGPDPPPG. The span at 1678 to 1688 shows a compositional bias: basic and acidic residues; the sequence is VDSRSSSDHPL. Over residues 1692–1702 the composition is skewed to low complexity; that stretch reads SSASTLSSLSA. Composition is skewed to gly residues over residues 1703–1718 and 1764–1774; these read EGGG…GAGV and ASGGLRPGPSG. Positions 1775 to 1785 are enriched in low complexity; sequence GLRDPVTPTSP. The segment covering 1844–1855 has biased composition (pro residues); that stretch reads PGPPPPPLPGPL. Residue Arg1895 is modified to Omega-N-methylarginine. 3 stretches are compositionally biased toward low complexity: residues 1917-1940, 1954-1980, and 1996-2006; these read SSLQ…VSSL, TGTG…STST, and RRAPSPSLLPA. Omega-N-methylarginine is present on residues Arg2016, Arg2036, and Arg2074. Residues 2098–2161 enclose the SAM domain; that stretch reads WTKFDVADWL…DRALKFFLER (64 aa).

The protein belongs to the SHANK family. As to quaternary structure, may homomultimerize via its SAM domain. Interacts with the C-terminus of SSTR2 via the PDZ domain. Interacts with IGSF9, SHARPIN, SPTAN1, HOMER1 and DLGAP1/GKAP isoforms 1 and 2. Part of a complex with DLG4/PSD-95 and DLGAP1/GKAP. Interacts with BAIAP2. Interacts with HOMER1 and HOMER3. Expressed in brain particularly in the amygdala, hippocampus, substantia nigra and thalamus. Isoform 2 seems to be expressed ubiquitously.

The protein resides in the cytoplasm. Its subcellular location is the postsynaptic density. The protein localises to the synapse. Functionally, seems to be an adapter protein in the postsynaptic density (PSD) of excitatory synapses that interconnects receptors of the postsynaptic membrane including NMDA-type and metabotropic glutamate receptors via complexes with GKAP/PSD-95 and Homer, respectively, and the actin-based cytoskeleton. Plays a role in the structural and functional organization of the dendritic spine and synaptic junction. This chain is SH3 and multiple ankyrin repeat domains protein 1 (SHANK1), found in Homo sapiens (Human).